A 256-amino-acid polypeptide reads, in one-letter code: Thiazole synthase (256 aa).

Catalysis depends on Lys95, which acts as the Schiff-base intermediate with DXP. Residues Gly156, 182–183 (AG), and 204–205 (NT) contribute to the 1-deoxy-D-xylulose 5-phosphate site.

This sequence belongs to the ThiG family. As to quaternary structure, homotetramer. Forms heterodimers with either ThiH or ThiS.

It localises to the cytoplasm. It carries out the reaction [ThiS sulfur-carrier protein]-C-terminal-Gly-aminoethanethioate + 2-iminoacetate + 1-deoxy-D-xylulose 5-phosphate = [ThiS sulfur-carrier protein]-C-terminal Gly-Gly + 2-[(2R,5Z)-2-carboxy-4-methylthiazol-5(2H)-ylidene]ethyl phosphate + 2 H2O + H(+). The protein operates within cofactor biosynthesis; thiamine diphosphate biosynthesis. Catalyzes the rearrangement of 1-deoxy-D-xylulose 5-phosphate (DXP) to produce the thiazole phosphate moiety of thiamine. Sulfur is provided by the thiocarboxylate moiety of the carrier protein ThiS. In vitro, sulfur can be provided by H(2)S. The protein is Thiazole synthase of Salmonella paratyphi A (strain ATCC 9150 / SARB42).